The sequence spans 293 residues: Acetylglutamate kinase (293 aa).

Residues 70–71 (GG), R92, and N186 each bind substrate.

Belongs to the acetylglutamate kinase family. ArgB subfamily.

It is found in the cytoplasm. The enzyme catalyses N-acetyl-L-glutamate + ATP = N-acetyl-L-glutamyl 5-phosphate + ADP. Its pathway is amino-acid biosynthesis; L-arginine biosynthesis; N(2)-acetyl-L-ornithine from L-glutamate: step 2/4. Functionally, catalyzes the ATP-dependent phosphorylation of N-acetyl-L-glutamate. The sequence is that of Acetylglutamate kinase from Synechococcus sp. (strain CC9605).